Reading from the N-terminus, the 332-residue chain is Cysteine and histidine-rich domain-containing protein 1 (332 aa).

Alanine 2 is subject to N-acetylalanine. Residues 2-77 (ALLCYNRGCG…KPPEPVKPEV (76 aa)) form an interaction with PPP5C region. Residues cysteine 5, cysteine 10, cysteine 24, histidine 27, cysteine 42, and cysteine 43 each contribute to the Zn(2+) site. 2 consecutive CHORD domains span residues 5 to 64 (CYNR…KGRH) and 157 to 216 (CKNG…TGKH). Threonine 47 is subject to Phosphothreonine. A Phosphoserine modification is found at serine 51. Zn(2+) contacts are provided by cysteine 59, histidine 64, cysteine 157, cysteine 162, cysteine 176, histidine 179, cysteine 194, cysteine 195, cysteine 211, and histidine 216. The disordered stretch occupies residues 61–82 (KGRHNSEKPPEPVKPEVKTTEK). The span at 64-82 (HNSEKPPEPVKPEVKTTEK) shows a compositional bias: basic and acidic residues. The interaction with HSP90AA1 and HSP90AB1 stretch occupies residues 65–316 (NSEKPPEPVK…AEPMQWASLE (252 aa)). The 90-residue stretch at 227-316 (VVPCRHDWHQ…AEPMQWASLE (90 aa)) folds into the CS domain.

In terms of assembly, interacts with HSP90AA1, HSP90AB1, PPP5C, ROCK1 and ROCK2.

Regulates centrosome duplication, probably by inhibiting the kinase activity of ROCK2. Proposed to act as co-chaperone for HSP90. May play a role in the regulation of NOD1 via a HSP90 chaperone complex. In vitro, has intrinsic chaperone activity. This function may be achieved by inhibiting association of ROCK2 with NPM1. Plays a role in ensuring the localization of the tyrosine kinase receptor EGFR to the plasma membrane, and thus ensures the subsequent regulation of EGFR activity and EGF-induced actin cytoskeleton remodeling. Involved in stress response. Prevents tumorigenesis. The protein is Cysteine and histidine-rich domain-containing protein 1 (CHORDC1) of Sus scrofa (Pig).